A 293-amino-acid polypeptide reads, in one-letter code: 33 kDa chaperonin (293 aa).

2 disulfides stabilise this stretch: cysteine 239–cysteine 241 and cysteine 272–cysteine 275.

It belongs to the HSP33 family. Under oxidizing conditions two disulfide bonds are formed involving the reactive cysteines. Under reducing conditions zinc is bound to the reactive cysteines and the protein is inactive.

It localises to the cytoplasm. Functionally, redox regulated molecular chaperone. Protects both thermally unfolding and oxidatively damaged proteins from irreversible aggregation. Plays an important role in the bacterial defense system toward oxidative stress. The chain is 33 kDa chaperonin from Limosilactobacillus fermentum (strain NBRC 3956 / LMG 18251) (Lactobacillus fermentum).